The following is a 125-amino-acid chain: Linear element protein rec27 (125 aa).

Positions 45-104 (KTNIENEKKAFIKDVSQVQQKIKEFEIQKANQIKQLNEEKLSIEARKQQLEIEIRNQLLQ) form a coiled coil.

As to quaternary structure, component of linear elements (LinEs), which are similar to synaptonemal complexes, at least composed of rec27, rec25, rec10 and mug20.

Its subcellular location is the cytoplasm. The protein resides in the nucleus. It is found in the chromosome. In terms of biological role, during meiotic DNA recombination, binds to and activates DNA double-strand break (DSB) hotspot sites. This is Linear element protein rec27 from Schizosaccharomyces pombe (strain 972 / ATCC 24843) (Fission yeast).